We begin with the raw amino-acid sequence, 364 residues long: DNA polymerase IV (364 aa).

The UmuC domain occupies 14-198 (IIHIDMDAFF…LPIEKFHGVG (185 aa)). Residues Asp18 and Asp116 each coordinate Mg(2+). The active site involves Glu117.

This sequence belongs to the DNA polymerase type-Y family. As to quaternary structure, monomer. The cofactor is Mg(2+).

The protein resides in the cytoplasm. It catalyses the reaction DNA(n) + a 2'-deoxyribonucleoside 5'-triphosphate = DNA(n+1) + diphosphate. Its function is as follows. Poorly processive, error-prone DNA polymerase involved in untargeted mutagenesis. Copies undamaged DNA at stalled replication forks, which arise in vivo from mismatched or misaligned primer ends. These misaligned primers can be extended by PolIV. Exhibits no 3'-5' exonuclease (proofreading) activity. May be involved in translesional synthesis, in conjunction with the beta clamp from PolIII. The chain is DNA polymerase IV from Streptococcus pyogenes serotype M6 (strain ATCC BAA-946 / MGAS10394).